Reading from the N-terminus, the 138-residue chain is Basic phospholipase A2 homolog acutohaemolysin (138 aa).

An N-terminal signal peptide occupies residues 1–16 (MRALWIVAVLLVGVEG). 7 disulfide bridges follow: cysteine 42–cysteine 131, cysteine 44–cysteine 60, cysteine 59–cysteine 111, cysteine 65–cysteine 138, cysteine 66–cysteine 104, cysteine 73–cysteine 97, and cysteine 91–cysteine 102. The important for membrane-damaging activities in eukaryotes and bacteria; heparin-binding stretch occupies residues 121 to 133 (KSFRYHLKPSCKK).

In terms of assembly, monomer. As to expression, expressed by the venom gland.

It is found in the secreted. Functionally, snake venom phospholipase A2 homolog that lacks enzymatic activity. Is myotoxic. Has a strong indirect hemolytic activity and anticoagulant activity. A model of myotoxic mechanism has been proposed: an apo Lys49-PLA2 is activated by the entrance of a hydrophobic molecule (e.g. fatty acid) at the hydrophobic channel of the protein leading to a reorientation of a monomer. This reorientation causes a transition between 'inactive' to 'active' states, causing alignment of C-terminal and membrane-docking sites (MDoS) side-by-side and putting the membrane-disruption sites (MDiS) in the same plane, exposed to solvent and in a symmetric position for both monomers. The MDoS region stabilizes the toxin on membrane by the interaction of charged residues with phospholipid head groups. Subsequently, the MDiS region destabilizes the membrane with penetration of hydrophobic residues. This insertion causes a disorganization of the membrane, allowing an uncontrolled influx of ions (i.e. calcium and sodium), and eventually triggering irreversible intracellular alterations and cell death. The polypeptide is Basic phospholipase A2 homolog acutohaemolysin (Deinagkistrodon acutus (Hundred-pace snake)).